A 155-amino-acid chain; its full sequence is MNINIICIGKIKDKYINDGIAEFSKRMTSFVSLNIIELKEYNKEDNINISIEKESLEILKQISKSNSYNILLDLEGKEINSENMSKYIENLKNIGISSINFIIGGSNGVSKNVKNSVDMKLKFSHFTFPHQLMRLILLEQVYRWFAISNNIKYHK.

Positions 72 and 104 each coordinate S-adenosyl-L-methionine.

This sequence belongs to the RNA methyltransferase RlmH family. Homodimer.

The protein resides in the cytoplasm. It catalyses the reaction pseudouridine(1915) in 23S rRNA + S-adenosyl-L-methionine = N(3)-methylpseudouridine(1915) in 23S rRNA + S-adenosyl-L-homocysteine + H(+). Its function is as follows. Specifically methylates the pseudouridine at position 1915 (m3Psi1915) in 23S rRNA. In Fusobacterium nucleatum subsp. nucleatum (strain ATCC 25586 / DSM 15643 / BCRC 10681 / CIP 101130 / JCM 8532 / KCTC 2640 / LMG 13131 / VPI 4355), this protein is Ribosomal RNA large subunit methyltransferase H.